Consider the following 785-residue polypeptide: Copal-8-ol diphosphate hydratase TPSSA3, chloroplastic (785 aa).

Arginine 240 provides a ligand contact to substrate. Positions 372 and 374 each coordinate Mg(2+). A DXDD motif motif is present at residues 372-375; sequence DIDD. Arginine 459 is a substrate binding site.

It belongs to the terpene synthase family. Mg(2+) is required as a cofactor.

Its subcellular location is the plastid. The protein localises to the chloroplast. It carries out the reaction (2E,6E,10E)-geranylgeranyl diphosphate + H2O = 8-hydroxycopalyl diphosphate. The protein operates within secondary metabolite biosynthesis; terpenoid biosynthesis. Involved in the biosynthesis of labdane-type diterpenoid including sclareol, a diterpene-diol that is used as fragrance and flavoring, and has anticancer effects (able to kill leukemic and colon cancer cells by apoptosis). Sclareol can also be used as synthesis precursor of ambergris substitution fragance products such as ambrox. Terpene synthase that produces 8-hydroxycopalyl diphosphate from geranylgeranyl diphosphate (GGPP). The chain is Copal-8-ol diphosphate hydratase TPSSA3, chloroplastic from Salvia sclarea (Clary sage).